A 256-amino-acid polypeptide reads, in one-letter code: Fumarate reductase iron-sulfur subunit (256 aa).

Positions Met7 to Phe97 constitute a 2Fe-2S ferredoxin-type domain. Position 14 (Tyr14) interacts with a menaquinone. [2Fe-2S] cluster contacts are provided by Cys58, Cys63, Cys66, and Cys78. A 4Fe-4S ferredoxin-type domain is found at Leu151–Leu180. [4Fe-4S] cluster contacts are provided by Cys160, Cys163, and Cys166. Residues Cys170, Cys216, and Cys222 each contribute to the [3Fe-4S] cluster site. Cys226 serves as a coordination point for [4Fe-4S] cluster. Asn237–Lys240 is an a menaquinone binding site.

Belongs to the succinate dehydrogenase/fumarate reductase iron-sulfur protein family. Fumarate dehydrogenase forms part of an enzyme complex containing four subunits: a flavoprotein, an iron-sulfur, and two hydrophobic anchor proteins. It depends on [2Fe-2S] cluster as a cofactor. Requires [3Fe-4S] cluster as cofactor. The cofactor is [4Fe-4S] cluster.

It is found in the cell inner membrane. The catalysed reaction is a quinone + succinate = fumarate + a quinol. The enzyme catalyses a menaquinone + succinate = a menaquinol + fumarate. The chain is Fumarate reductase iron-sulfur subunit (frdB) from Haemophilus influenzae (strain ATCC 51907 / DSM 11121 / KW20 / Rd).